The sequence spans 348 residues: Doublesex- and mab-3-related transcription factor dmd-10 (348 aa).

DNA-binding regions (DM) lie at residues 43-91 (CQRC…YNQF) and 119-166 (CQKC…KIRR). The interval 316 to 348 (SMSMSSSPSKDDESGDEDSDGLNSNSIIDVITV) is disordered.

This sequence belongs to the DMRT family. In terms of tissue distribution, dimorphically expressed in the dimorphically connected interneuron AVG; expression is observed in the AVG in males, but not in hermaphrodites.

It is found in the nucleus. Transcription factor. Plays a role in neuronal signaling in polymodal sensory neuron ASH, downstream of sensory receptor activation. Required for maintenance of AVG synapses. The polypeptide is Doublesex- and mab-3-related transcription factor dmd-10 (Caenorhabditis elegans).